The primary structure comprises 109 residues: Small ribosomal subunit protein uS17 (109 aa).

Belongs to the universal ribosomal protein uS17 family. Part of the 30S ribosomal subunit.

Functionally, one of the primary rRNA binding proteins, it binds specifically to the 5'-end of 16S ribosomal RNA. The sequence is that of Small ribosomal subunit protein uS17 from Methanosarcina mazei (strain ATCC BAA-159 / DSM 3647 / Goe1 / Go1 / JCM 11833 / OCM 88) (Methanosarcina frisia).